The chain runs to 378 residues: Alpha-(1,3)-fucosyltransferase fut-5 (378 aa).

Over 1–7 (MKHNTLR) the chain is Cytoplasmic. Residues 8-28 (AVFQFSFFIGICTFIMIAGYS) form a helical; Signal-anchor for type II membrane protein membrane-spanning segment. Residues 29–378 (YQINYNQRMG…CDNSFATRFL (350 aa)) lie on the Lumenal side of the membrane. Residues N44, N88, N105, N143, N171, and N307 are each glycosylated (N-linked (GlcNAc...) asparagine).

This sequence belongs to the glycosyltransferase 10 family. Requires Ca(2+) as cofactor. In terms of processing, N-glycosylated.

It is found in the golgi apparatus. The protein localises to the golgi stack membrane. The catalysed reaction is a beta-D-galactosyl-(1-&gt;3)-N-acetyl-beta-D-glucosaminyl derivative + GDP-beta-L-fucose = a beta-D-galactosyl-(1-&gt;3)-[alpha-L-fucosyl-(1-&gt;4)]-N-acetyl-beta-D-glucosaminyl derivative + GDP + H(+). Its pathway is protein modification; protein glycosylation. Its activity is regulated as follows. Inhibited by Cu(2+) and Ni(2+), and to a lesser extent by EDTA, Mn(2+) and Mg(2+). In terms of biological role, catalyzes the addition of fucose in alpha 1-3 linkage to GalNAc-beta-1-&gt;4-GlcNAc-beta-1-&gt;3-Gal-beta-1-&gt;4-Glc (LDNT)acceptor. Unlike fut-1, does not add fucose to Man-alpha-1-&gt;3-(Man-alpha-1-&gt;6)-Man-beta-1-&gt;4-GlcNAc-beta-1-&gt;4-GlcNAc-beta-1-Asn (M3), Man-alpha-1-&gt;3-(Man-alpha-1-&gt;6)-Man-beta-1-&gt;4-GlcNAc-beta-1-&gt;4-(Fuc-alpha-1-&gt;6)-GlcNAc-beta-1-Asn (M3F6) or GlcNAc-beta-1-&gt;2-Man-alpha-1-&gt;3-(GlcNAc-beta-1-&gt;2-Man-alpha-1-&gt;6)-Man-beta-1-4-GlcNAc-beta-1-&gt;4-(Fuc-alpha-1-&gt;6)-GlcNAc-beta-1-Asn (GnM3F6) acceptors. This is Alpha-(1,3)-fucosyltransferase fut-5 from Caenorhabditis elegans.